Reading from the N-terminus, the 634-residue chain is Threonine--tRNA ligase (634 aa).

Residues 1–61 (MINITLPDGS…DHDASLRIIT (61 aa)) form the TGS domain. The catalytic stretch occupies residues 243–534 (DHRRIGKAQD…LIEHHAGAFP (292 aa)). Zn(2+) is bound by residues C334, H385, and H511.

It belongs to the class-II aminoacyl-tRNA synthetase family. As to quaternary structure, homodimer. Requires Zn(2+) as cofactor.

Its subcellular location is the cytoplasm. The catalysed reaction is tRNA(Thr) + L-threonine + ATP = L-threonyl-tRNA(Thr) + AMP + diphosphate + H(+). Its function is as follows. Catalyzes the attachment of threonine to tRNA(Thr) in a two-step reaction: L-threonine is first activated by ATP to form Thr-AMP and then transferred to the acceptor end of tRNA(Thr). Also edits incorrectly charged L-seryl-tRNA(Thr). This chain is Threonine--tRNA ligase, found in Xanthomonas axonopodis pv. citri (strain 306).